A 415-amino-acid polypeptide reads, in one-letter code: MANRNLSESLFKPRQKHQETSTLVKHRDPRLIAGNYSTLDGNSHGSWYRMINRLMWIWREIDPFEIEEVLCRIAMTNAQRSDDNLLDTVIGYRKGNWVFEWSHQAMLWQQRALQAEQIPEASNFWLKAANLYSIAGYPHLKGDELSQQAVILANKAYENAARCSGYQLRKIEFKLKEGGCVTGFLHLPQQLQRPSPTILVCGSLDNLQSDYYRLFRDYLAPLGFAMLTVDMPSIGYSSRLRMTQDTCILHQQIIHQLDEIPWIDHTRIGLFGFRFGANIAVRLAYLESKRIKGVATLGAIVHEWLSSVERQQNSPSMYLDMFASRLGIYNVDEKAFRLELGCYSLKKQGLLGRRCSVPMLAGYWQNDIFSPKEESKLIAMSSMDSQLLAIPTTPVYNSFNKALREISQWLRNKVC.

Residues Met1 to Leu23 form a disordered region.

This sequence belongs to the FrsA family.

It catalyses the reaction a carboxylic ester + H2O = an alcohol + a carboxylate + H(+). Its function is as follows. Catalyzes the hydrolysis of esters. The chain is Esterase FrsA from Photorhabdus laumondii subsp. laumondii (strain DSM 15139 / CIP 105565 / TT01) (Photorhabdus luminescens subsp. laumondii).